An 854-amino-acid polypeptide reads, in one-letter code: Arsenate respiratory reductase molybdopterin-containing subunit ArrA (854 aa).

The segment at residues 1–41 (MKKENQVNLGRRQLLKSTAAGTVLTGIGGTLSFTPIVEGIA) is a signal peptide (tat-type signal). The region spanning 54 to 110 (GEWLATTCQGCTSWCAKQIYVMDGRALKVRGNPNSGVHGMSSCPRQHLSLQQVYDPD) is the 4Fe-4S Mo/W bis-MGD-type domain. [4Fe-4S] cluster contacts are provided by C61, C64, C68, and C96. R165 contacts arsenite. Arsenate is bound at residue Y166. H189 contributes to the arsenite binding site. S190 provides a ligand contact to arsenate. A Mo-bis(molybdopterin guanine dinucleotide)-binding site is contributed by C193. K198 contacts arsenate. Residue Y210 participates in arsenite binding.

Belongs to the prokaryotic molybdopterin-containing oxidoreductase family. As to quaternary structure, heterodimer composed of one large subunit (ArrA) and one small subunit (ArrB). [4Fe-4S] cluster is required as a cofactor. It depends on Mo-bis(molybdopterin guanine dinucleotide) as a cofactor. In terms of processing, predicted to be exported by the Tat system. The position of the signal peptide cleavage has not been experimentally proven.

It is found in the periplasm. The catalysed reaction is arsenite + A + H2O = arsenate + AH2 + H(+). Its activity is regulated as follows. Phosphate is a competitive inhibitor. Functionally, component of the arsenate respiratory reductase (Arr) complex, which catalyzes the reduction of arsenate (As(V)) to arsenite (As(III)). ArrA is the arsenate-binding subunit. The periplasmic localization of this complex may allow the cell to couple arsenate reduction to energy production before arsenate can be transported to the cell cytoplasm and enter the ars detoxification pathway, an energy-requiring process. The protein is Arsenate respiratory reductase molybdopterin-containing subunit ArrA of Shewanella sp. (strain ANA-3).